Reading from the N-terminus, the 323-residue chain is Fructose-1,6-bisphosphatase class 1 (323 aa).

Mg(2+)-binding residues include Glu-88, Asp-107, Leu-109, and Asp-110. Residues 110 to 113 (DGSS) and Asn-200 contribute to the substrate site. Glu-272 serves as a coordination point for Mg(2+).

The protein belongs to the FBPase class 1 family. As to quaternary structure, homotetramer. Mg(2+) serves as cofactor.

The protein resides in the cytoplasm. The catalysed reaction is beta-D-fructose 1,6-bisphosphate + H2O = beta-D-fructose 6-phosphate + phosphate. Its pathway is carbohydrate biosynthesis; gluconeogenesis. The chain is Fructose-1,6-bisphosphatase class 1 from Acinetobacter baumannii (strain ATCC 17978 / DSM 105126 / CIP 53.77 / LMG 1025 / NCDC KC755 / 5377).